A 444-amino-acid chain; its full sequence is UDP-N-acetylglucosamine 1-carboxyvinyltransferase (444 aa).

22–23 (KN) is a phosphoenolpyruvate binding site. Residue arginine 94 participates in UDP-N-acetyl-alpha-D-glucosamine binding. The active-site Proton donor is aspartate 119. Residues aspartate 309 and valine 331 each coordinate UDP-N-acetyl-alpha-D-glucosamine.

This sequence belongs to the EPSP synthase family. MurA subfamily.

The protein resides in the cytoplasm. It catalyses the reaction phosphoenolpyruvate + UDP-N-acetyl-alpha-D-glucosamine = UDP-N-acetyl-3-O-(1-carboxyvinyl)-alpha-D-glucosamine + phosphate. The protein operates within cell wall biogenesis; peptidoglycan biosynthesis. Its function is as follows. Cell wall formation. Adds enolpyruvyl to UDP-N-acetylglucosamine. In Chlamydia trachomatis serovar D (strain ATCC VR-885 / DSM 19411 / UW-3/Cx), this protein is UDP-N-acetylglucosamine 1-carboxyvinyltransferase.